The primary structure comprises 167 residues: Telethonin (167 aa).

Ser-39 is subject to Phosphoserine. The segment at 142–167 is disordered; it reads PVVPVSKPGPLRRTLSRSMSQEAQRG. Over residues 157 to 167 the composition is skewed to polar residues; sequence SRSMSQEAQRG.

As to quaternary structure, interacts with MYOZ1, MYOZ2 and MYOZ3. Interacts with CSRP3. Interacts directly with the N-terminal Ig-like domains of 2 titin (TTN) molecules. Interacts with ANKRD2; the interaction is direct.

It is found in the cytoplasm. The protein resides in the myofibril. The protein localises to the sarcomere. Its function is as follows. Muscle assembly regulating factor. Mediates the antiparallel assembly of titin (TTN) molecules at the sarcomeric Z-disk. The protein is Telethonin (Tcap) of Mus musculus (Mouse).